A 65-amino-acid chain; its full sequence is Ferredoxin-like protein in vnf region (65 aa).

2 consecutive 4Fe-4S ferredoxin-type domains span residues 2-29 and 30-65; these read AMAI…VLQG and GIYV…PLDD. The [4Fe-4S] cluster site is built by Cys10, Cys13, Cys16, Cys20, Cys39, Cys42, Cys50, and Cys54.

The cofactor is [4Fe-4S] cluster.

This Azotobacter chroococcum mcd 1 protein is Ferredoxin-like protein in vnf region.